We begin with the raw amino-acid sequence, 314 residues long: Protoheme IX farnesyltransferase (314 aa).

The next 8 membrane-spanning stretches (helical) occupy residues valine 30 to histidine 50, proline 51 to leucine 71, phenylalanine 122 to tryptophan 142, isoleucine 151 to glycine 171, tryptophan 178 to phenylalanine 198, isoleucine 224 to glycine 244, valine 247 to tryptophan 267, and phenylalanine 285 to alanine 305.

This sequence belongs to the UbiA prenyltransferase family. Protoheme IX farnesyltransferase subfamily. In terms of assembly, interacts with CtaA.

The protein localises to the cell inner membrane. The enzyme catalyses heme b + (2E,6E)-farnesyl diphosphate + H2O = Fe(II)-heme o + diphosphate. It functions in the pathway porphyrin-containing compound metabolism; heme O biosynthesis; heme O from protoheme: step 1/1. Its function is as follows. Converts heme B (protoheme IX) to heme O by substitution of the vinyl group on carbon 2 of heme B porphyrin ring with a hydroxyethyl farnesyl side group. The polypeptide is Protoheme IX farnesyltransferase (Roseobacter denitrificans (strain ATCC 33942 / OCh 114) (Erythrobacter sp. (strain OCh 114))).